The sequence spans 2034 residues: Pecanex-like protein 3 (2034 aa).

2 consecutive transmembrane segments (helical) span residues 33-53 (CFHL…YMVL) and 54-74 (PPSL…FATI). A disordered region spans residues 96–118 (STMGELEEEPAQGDSNPPRDPGV). A Phosphoserine modification is found at serine 127. Position 129 is a phosphothreonine (threonine 129). Disordered stretches follow at residues 193-242 (IGDL…PLLK), 260-517 (DRAL…LRPP), and 540-625 (VLPA…SHSR). Over residues 294-303 (KAGSSDSCFS) the composition is skewed to polar residues. Positions 305–319 (TDRETLSSFKSEKTN) are enriched in basic and acidic residues. The N-linked (GlcNAc...) asparagine glycan is linked to asparagine 319. At threonine 370 the chain carries Phosphothreonine. The segment covering 391-409 (PSKRQPPLRRHSPPGRAPR) has biased composition (basic residues). 2 positions are modified to phosphoserine: serine 392 and serine 431. The span at 427–436 (GSELSPASSL) shows a compositional bias: polar residues. Positions 444–460 (TDSSSSTSCYSPESSRG) are enriched in low complexity. Polar residues predominate over residues 488–497 (TQRTPSTASA). At serine 505 the chain carries Phosphoserine. Transmembrane regions (helical) follow at residues 790-812 (VLEN…LLLL), 819-836 (IWVF…YSLL), 852-872 (WVIA…IWLL), 880-900 (PFPP…FFCA), 903-923 (VATV…LPQV), 946-968 (SPLT…YGFC), and 980-1000 (HVPV…YHLS). Serine 1025 is subject to Phosphoserine. Transmembrane regions (helical) follow at residues 1053-1073 (LVMC…TVFI), 1078-1098 (VLGF…HYLL), 1244-1264 (FVLT…HAFA), and 1280-1300 (LLSG…VFIM). Serine 1697 is subject to Phosphoserine. A glycan (N-linked (GlcNAc...) asparagine) is linked at asparagine 1770. Positions 1844–2034 (GGLTSLSNNP…AAQPLLEHQY (191 aa)) are disordered. Pro residues predominate over residues 1890–1910 (RPPPLLQWPPPRLPGPPPASP). At serine 1909 the chain carries Phosphoserine. The span at 1925-1939 (GLLSSEGPSGKWSLG) shows a compositional bias: low complexity. A Phosphoserine modification is found at serine 1955. Low complexity predominate over residues 1969 to 1978 (LSLSLSLSLS).

The protein belongs to the pecanex family.

Its subcellular location is the membrane. This chain is Pecanex-like protein 3, found in Homo sapiens (Human).